Here is a 255-residue protein sequence, read N- to C-terminus: Octanoyltransferase (255 aa).

The disordered stretch occupies residues 1 to 21; that stretch reads MCATPVSPSPESPRSAQAGAA. The BPL/LPL catalytic domain occupies 56-242; the sequence is FETSDEIWLV…SLIANIDGIP (187 aa). Substrate is bound by residues 96-103, 173-175, and 186-188; these read RGGQITYH, ALG, and GVS. Catalysis depends on Cys-204, which acts as the Acyl-thioester intermediate.

Belongs to the LipB family.

The protein localises to the cytoplasm. It catalyses the reaction octanoyl-[ACP] + L-lysyl-[protein] = N(6)-octanoyl-L-lysyl-[protein] + holo-[ACP] + H(+). It participates in protein modification; protein lipoylation via endogenous pathway; protein N(6)-(lipoyl)lysine from octanoyl-[acyl-carrier-protein]: step 1/2. Its function is as follows. Catalyzes the transfer of endogenously produced octanoic acid from octanoyl-acyl-carrier-protein onto the lipoyl domains of lipoate-dependent enzymes. Lipoyl-ACP can also act as a substrate although octanoyl-ACP is likely to be the physiological substrate. This is Octanoyltransferase from Paraburkholderia phymatum (strain DSM 17167 / CIP 108236 / LMG 21445 / STM815) (Burkholderia phymatum).